Reading from the N-terminus, the 244-residue chain is Probable transcriptional regulatory protein MMOB1910 (244 aa).

This sequence belongs to the TACO1 family.

It is found in the cytoplasm. The sequence is that of Probable transcriptional regulatory protein MMOB1910 from Mycoplasma mobile (strain ATCC 43663 / 163K / NCTC 11711) (Mesomycoplasma mobile).